Here is a 224-residue protein sequence, read N- to C-terminus: Response regulator protein GraR (224 aa).

Positions 2–115 constitute a Response regulatory domain; it reads QILLVEDDNT…VLIAKLQAIY (114 aa). Aspartate 51 carries the 4-aspartylphosphate modification. A DNA-binding region (ompR/PhoB-type) is located at residues 126-224; that stretch reads KRTLTWQDAV…KVGKGYMAHE (99 aa). 3 positions are modified to phosphothreonine: threonine 128, threonine 130, and threonine 149.

As to quaternary structure, interacts with GraX. Post-translationally, phosphorylated by GraS. Phosphorylated by Stk1; phosphorylation increases the DNA-binding activity of GraR.

It is found in the cytoplasm. In terms of biological role, member of the two-component regulatory system GraR/GraS involved in resistance against cationic antimicrobial peptides (CAMPs). Upon phosphorylation by GraS, functions as a transcription regulator by direct binding to promoter regions of target genes such as adhesins, exoproteins, transporters, toxins, and proteins involved in cell wall synthesis. Down-regulates the expression of many genes involved in RNA and amino acid synthesis or glycolysis. This chain is Response regulator protein GraR (graR), found in Staphylococcus aureus (strain USA300).